We begin with the raw amino-acid sequence, 91 residues long: Small ribosomal subunit protein uS19 (91 aa).

The protein belongs to the universal ribosomal protein uS19 family.

Functionally, protein S19 forms a complex with S13 that binds strongly to the 16S ribosomal RNA. The sequence is that of Small ribosomal subunit protein uS19 from Marinomonas sp. (strain MWYL1).